The chain runs to 988 residues: Transposase for transposon Tn501 (988 aa).

The protein belongs to the transposase 7 family.

Required for transposition of transposon Tn501. This chain is Transposase for transposon Tn501 (tnpA), found in Pseudomonas aeruginosa.